A 347-amino-acid polypeptide reads, in one-letter code: Histidinol-phosphate aminotransferase (347 aa).

K209 is subject to N6-(pyridoxal phosphate)lysine.

Belongs to the class-II pyridoxal-phosphate-dependent aminotransferase family. Histidinol-phosphate aminotransferase subfamily. In terms of assembly, homodimer. It depends on pyridoxal 5'-phosphate as a cofactor.

It carries out the reaction L-histidinol phosphate + 2-oxoglutarate = 3-(imidazol-4-yl)-2-oxopropyl phosphate + L-glutamate. It participates in amino-acid biosynthesis; L-histidine biosynthesis; L-histidine from 5-phospho-alpha-D-ribose 1-diphosphate: step 7/9. In Geotalea uraniireducens (strain Rf4) (Geobacter uraniireducens), this protein is Histidinol-phosphate aminotransferase.